Reading from the N-terminus, the 517-residue chain is Bifunctional purine biosynthesis protein PurH (517 aa).

In terms of domain architecture, MGS-like spans 1 to 146 (MKRLALLSTS…KNFAHLTVLC (146 aa)).

The protein belongs to the PurH family.

The catalysed reaction is (6R)-10-formyltetrahydrofolate + 5-amino-1-(5-phospho-beta-D-ribosyl)imidazole-4-carboxamide = 5-formamido-1-(5-phospho-D-ribosyl)imidazole-4-carboxamide + (6S)-5,6,7,8-tetrahydrofolate. The enzyme catalyses IMP + H2O = 5-formamido-1-(5-phospho-D-ribosyl)imidazole-4-carboxamide. Its pathway is purine metabolism; IMP biosynthesis via de novo pathway; 5-formamido-1-(5-phospho-D-ribosyl)imidazole-4-carboxamide from 5-amino-1-(5-phospho-D-ribosyl)imidazole-4-carboxamide (10-formyl THF route): step 1/1. The protein operates within purine metabolism; IMP biosynthesis via de novo pathway; IMP from 5-formamido-1-(5-phospho-D-ribosyl)imidazole-4-carboxamide: step 1/1. In Trichodesmium erythraeum (strain IMS101), this protein is Bifunctional purine biosynthesis protein PurH.